Here is a 233-residue protein sequence, read N- to C-terminus: Probable septum site-determining protein MinC (233 aa).

It belongs to the MinC family. In terms of assembly, interacts with MinD and FtsZ.

In terms of biological role, cell division inhibitor that blocks the formation of polar Z ring septums. Rapidly oscillates between the poles of the cell to destabilize FtsZ filaments that have formed before they mature into polar Z rings. Prevents FtsZ polymerization. This Proteus mirabilis (strain HI4320) protein is Probable septum site-determining protein MinC.